The primary structure comprises 151 residues: UPF0178 protein Tcr_1995 (151 aa).

A disordered region spans residues 116–135 (RSSGVDTGGPPPLNQKDRQA).

The protein belongs to the UPF0178 family.

In Hydrogenovibrio crunogenus (strain DSM 25203 / XCL-2) (Thiomicrospira crunogena), this protein is UPF0178 protein Tcr_1995.